Here is a 301-residue protein sequence, read N- to C-terminus: Protoheme IX farnesyltransferase (301 aa).

The next 8 membrane-spanning stretches (helical) occupy residues 30 to 50 (VISLLDLAAIAGFVLGLPKAI), 55 to 75 (IIVSFLAVIIGGSLASGGGMI), 106 to 126 (AYAIGSIFIVVGTLIGFLANP), 127 to 147 (LTALFIALGAFIYVVIYSIWL), 152 to 172 (WWNIVIGGFAGSAAAWAGFAA), 177 to 197 (FTLLSFLLGFLIFMWTPGHFW), 233 to 253 (ALMVPFALLIGLYAGLIYLIV), and 281 to 301 (FKLSSPYLAIILLTLIIVKLI).

Belongs to the UbiA prenyltransferase family. Protoheme IX farnesyltransferase subfamily.

The protein resides in the cell membrane. It carries out the reaction heme b + (2E,6E)-farnesyl diphosphate + H2O = Fe(II)-heme o + diphosphate. It participates in porphyrin-containing compound metabolism; heme O biosynthesis; heme O from protoheme: step 1/1. Its function is as follows. Converts heme B (protoheme IX) to heme O by substitution of the vinyl group on carbon 2 of heme B porphyrin ring with a hydroxyethyl farnesyl side group. This is Protoheme IX farnesyltransferase from Sulfurisphaera tokodaii (strain DSM 16993 / JCM 10545 / NBRC 100140 / 7) (Sulfolobus tokodaii).